We begin with the raw amino-acid sequence, 361 residues long: Peptide chain release factor 1 (361 aa).

The residue at position 237 (glutamine 237) is an N5-methylglutamine. Positions 287–297 (KQQKEQSDTRK) are enriched in basic and acidic residues. The segment at 287–313 (KQQKEQSDTRKSLVGSGDRSERIRTYN) is disordered.

The protein belongs to the prokaryotic/mitochondrial release factor family. In terms of processing, methylated by PrmC. Methylation increases the termination efficiency of RF1.

It localises to the cytoplasm. Peptide chain release factor 1 directs the termination of translation in response to the peptide chain termination codons UAG and UAA. The chain is Peptide chain release factor 1 from Francisella tularensis subsp. tularensis (strain FSC 198).